Consider the following 434-residue polypeptide: Glucose-6-phosphate 1-dehydrogenase (434 aa).

NADP(+) is bound by residues 7 to 14 (GSSGDLAK), R36, Y93, and K112. Residues K112, 137-141 (HYLLK), E175, and D193 contribute to the D-glucose 6-phosphate site. The active-site Proton acceptor is the H198. The D-glucose 6-phosphate site is built by K280 and K285. Residue R286 participates in NADP(+) binding.

It belongs to the glucose-6-phosphate dehydrogenase family.

The enzyme catalyses D-glucose 6-phosphate + NADP(+) = 6-phospho-D-glucono-1,5-lactone + NADPH + H(+). It functions in the pathway carbohydrate degradation; pentose phosphate pathway; D-ribulose 5-phosphate from D-glucose 6-phosphate (oxidative stage): step 1/3. Catalyzes the rate-limiting step of the oxidative pentose-phosphate pathway, which represents a route for the dissimilation of carbohydrates besides glycolysis. The main function of this enzyme is to provide reducing power (NADPH) and pentose phosphates for fatty acid and nucleic acid synthesis. The protein is Glucose-6-phosphate 1-dehydrogenase (ZWF1) of Encephalitozoon cuniculi (strain GB-M1) (Microsporidian parasite).